Here is a 272-residue protein sequence, read N- to C-terminus: Flt3 receptor-interacting lectin (272 aa).

Positions 1–8 (MFPSKVKS) are cleaved as a signal peptide. Alpha-D-mannopyranose contacts are provided by Asp94 and Gly112. 2 N-linked (GlcNAc...) asparagine glycosylation sites follow: Asn125 and Asn131. Alpha-D-mannopyranose contacts are provided by residues Asn152 and 237 to 238 (QD).

This sequence belongs to the leguminous lectin family. As to quaternary structure, dimer (alpha/beta)2. Tetramer (alpha/beta)4. In terms of processing, glycosylated at Asn-125 by either a paucimannose type N-glycan (alpha-4) or a single N-acetylglucosamine (alpha-3). Glycosylated at Asn-131 by a paucimannose type N-glycan (alpha-2, alpha-3 and alpha-4). In alpha-2, Asn-125 is deamidated to an Asp, possibly due to the action of intrinsic peptide N-glycosidase (PGNase).

Its subcellular location is the protein storage vacuole lumen. Its function is as follows. Mannose-binding lectin. Accommodates most effectively a non-reducing terminal alpha-d-mannosyl unit. Strongly precipitates murine IgM but not IgG. The polypeptide is Flt3 receptor-interacting lectin (Lablab purpureus (Hyacinth bean)).